The primary structure comprises 281 residues: MIETVTDLSRLRGIVADWRRQGLRVALVPTMGNLHAGHFSLVMLARHYADRVVSSVFVNPTQFGPHEDFRRYPRTPEADMRGLEHVGCDVLWLPSVETMYPLGTERTVRLFVPCVSDVLEGTFRPGHFEGVCTVVARLFNQVLPDVAVFGKKDYQQLVVIRQMVVDLAFPIEILGGCIVRESDGLAMSSRNQYLSMQERPQAAEIHRTLIAMRDAVMSGGVHADVEAEAVRRLEAAGFQVDYAVIRLSDLGEPIDGTVISPGIALVAARLGNTRLIDNLEF.

An ATP-binding site is contributed by methionine 31–histidine 38. Histidine 38 (proton donor) is an active-site residue. Glutamine 62 provides a ligand contact to (R)-pantoate. Beta-alanine is bound at residue glutamine 62. Residue glycine 150 to aspartate 153 participates in ATP binding. Position 156 (glutamine 156) interacts with (R)-pantoate. ATP is bound by residues valine 179 and methionine 187 to arginine 190.

It belongs to the pantothenate synthetase family. In terms of assembly, homodimer.

Its subcellular location is the cytoplasm. It catalyses the reaction (R)-pantoate + beta-alanine + ATP = (R)-pantothenate + AMP + diphosphate + H(+). It functions in the pathway cofactor biosynthesis; (R)-pantothenate biosynthesis; (R)-pantothenate from (R)-pantoate and beta-alanine: step 1/1. Catalyzes the condensation of pantoate with beta-alanine in an ATP-dependent reaction via a pantoyl-adenylate intermediate. The sequence is that of Pantothenate synthetase from Xylella fastidiosa (strain 9a5c).